The following is a 243-amino-acid chain: R-spondin-2 (243 aa).

Positions 1–21 (MQFQLFSFVLIILNCVDYSHC) are cleaved as a signal peptide. 11 disulfides stabilise this stretch: C40-C46, C43-C52, C55-C74, C78-C93, C96-C104, C101-C110, C113-C124, C128-C141, C145-C187, C156-C163, and C196-C203. Residues 90–134 (MNRCSRCRIENCDSCFSRDFCIKCKSGFYSHKGQCFEECPEGFAP) form an FU repeat. In terms of domain architecture, TSP type-1 spans 144 to 204 (GCEVGPWSEW…RCKMAMRHCP (61 aa)). N160 is a glycosylation site (N-linked (GlcNAc...) asparagine). Residues 202 to 243 (HCPGGTRTTKKKDKKNKKKKKKLLERAQEQHSVVLATDRSSQ) are disordered. Over residues 209–224 (TTKKKDKKNKKKKKKL) the composition is skewed to basic residues.

Belongs to the R-spondin family. In terms of assembly, binds heparin.

It localises to the secreted. Functionally, activator of the canonical Wnt signaling pathway by acting as a ligand for lgr4-6 receptors. Upon binding to lgr4-6 (lgr4, lgr5 or lgr6), lgr4-6 associate with phosphorylated lrp6 and frizzled receptors that are activated by extracellular Wnt receptors, triggering the canonical Wnt signaling pathway to increase expression of target genes. Acts both in the canonical. Wnt/beta-catenin-dependent pathway and in non-canonical Wnt signaling pathway. Activates neural markers and promotes muscle formation. Overexpression blocks activin, nodal and BMP4 signaling, suggesting that it may negatively regulate the TGF-beta pathway. During embryonic development, plays a crucial role in limb specification, amplifying the Wnt signaling pathway independently of LGR4-6 receptors, possibly by acting as a direct antagonistic ligand to RNF43 and ZNRF3, hence governing the number of limbs an embryo should form. In Xenopus tropicalis (Western clawed frog), this protein is R-spondin-2 (rspo2).